We begin with the raw amino-acid sequence, 74 residues long: UPF0270 protein NT01EI_3666 (74 aa).

The protein belongs to the UPF0270 family.

This chain is UPF0270 protein NT01EI_3666, found in Edwardsiella ictaluri (strain 93-146).